A 205-amino-acid polypeptide reads, in one-letter code: ATP synthase subunit b (205 aa).

The helical transmembrane segment at 51–69 (FAWRCLDFAVLLAIVVWAL) threads the bilayer.

Belongs to the ATPase B chain family. In terms of assembly, F-type ATPases have 2 components, F(1) - the catalytic core - and F(0) - the membrane proton channel. F(1) has five subunits: alpha(3), beta(3), gamma(1), delta(1), epsilon(1). F(0) has three main subunits: a(1), b(2) and c(10-14). The alpha and beta chains form an alternating ring which encloses part of the gamma chain. F(1) is attached to F(0) by a central stalk formed by the gamma and epsilon chains, while a peripheral stalk is formed by the delta and b chains.

The protein resides in the cell inner membrane. Functionally, f(1)F(0) ATP synthase produces ATP from ADP in the presence of a proton or sodium gradient. F-type ATPases consist of two structural domains, F(1) containing the extramembraneous catalytic core and F(0) containing the membrane proton channel, linked together by a central stalk and a peripheral stalk. During catalysis, ATP synthesis in the catalytic domain of F(1) is coupled via a rotary mechanism of the central stalk subunits to proton translocation. In terms of biological role, component of the F(0) channel, it forms part of the peripheral stalk, linking F(1) to F(0). The sequence is that of ATP synthase subunit b from Geotalea uraniireducens (strain Rf4) (Geobacter uraniireducens).